The sequence spans 473 residues: H(+)/Cl(-) exchange transporter ClcA (473 aa).

At 1 to 32 the chain is on the cytoplasmic side; it reads MKTDTSTFLAQQIVRLRRRDQIRRLMQRDKTP. A helical membrane pass occupies residues 33-69; it reads LAILLMAAVVGTLTGLVGVAFEKAVSWVQNMRIGALV. Topologically, residues 70–76 are periplasmic; the sequence is QVADHAF. The helical transmembrane segment at 77–100 threads the bilayer; it reads LLWPLAFILSALLAMVGYFLVRKF. The Selectivity filter part_1 signature appears at 106–110; it reads GSGIP. Chloride is bound at residue serine 107. An intramembrane region (helical) is located at residues 109–116; sequence IPEIEGAL. The Cytoplasmic portion of the chain corresponds to 117 to 123; it reads EELRPVR. 2 consecutive transmembrane segments (helical) span residues 124–141 and 148–166; these read WWRVLPVKFIGGMGTLGA and EGPTVQIGGNLGRMVLDVF. Positions 146–150 match the Selectivity filter part_2 motif; it reads GREGP. Over 167 to 176 the chain is Cytoplasmic; that stretch reads RMRSAEARHT. 2 consecutive intramembrane regions (helical) follow at residues 177 to 189 and 193 to 201; these read LLATGAAAGLSAA and PLAGILFII. The Cytoplasmic segment spans residues 202–214; that stretch reads EEMRPQFRYNLIS. A helical transmembrane segment spans residues 215-232; the sequence is IKAVFTGVIMSSIVFRIF. At 233 to 252 the chain is on the periplasmic side; it reads NGEAPIIEVGKLSDAPVNTL. The helical transmembrane segment at 253 to 281 threads the bilayer; it reads WLYLILGIIFGCVGPVFNSLVLRTQDMFQ. Over 282-287 the chain is Cytoplasmic; that stretch reads RFHGGE. Residues 288–309 traverse the membrane as a helical segment; that stretch reads IKKWVLMGGAIGGLCGILGLIE. The Periplasmic segment spans residues 310 to 329; sequence PEAAGGGFNLIPIAAAGNFS. The next 2 helical transmembrane spans lie at 330–349 and 355–376; these read VGLLLFIFITRVVTTLLCFS and GIFAPMLALGTLLGTAFGMAAA. A Selectivity filter part_3 motif is present at residues 355-359; sequence GIFAP. Chloride is bound by residues isoleucine 356 and phenylalanine 357. Topologically, residues 377 to 386 are periplasmic; it reads VLFPQYHLEA. Positions 387–401 form an intramembrane region, helical; the sequence is GTFAIAGMGALMAAS. The note=Loop between two helices intramembrane region spans 402–404; that stretch reads VRA. The helical intramembrane region spans 405 to 416; sequence PLTGIVLVLEMT. The segment at residues 417 to 421 is an intramembrane region (note=Loop between two helices); sequence DNYQL. A helical transmembrane segment spans residues 422 to 438; it reads ILPMIITCLGATLLAQF. The Cytoplasmic segment spans residues 439-473; it reads LGGKPLYSTILARTLAKQDAEQAAKNQNAPAGENT. Position 445 (tyrosine 445) interacts with chloride.

It belongs to the chloride channel (TC 2.A.49) family. ClcA subfamily. In terms of assembly, homodimer.

It is found in the cell inner membrane. It carries out the reaction 2 chloride(in) + H(+)(out) = 2 chloride(out) + H(+)(in). Proton-coupled chloride transporter. Functions as antiport system and exchanges two chloride ions for 1 proton. Probably acts as an electrical shunt for an outwardly-directed proton pump that is linked to amino acid decarboxylation, as part of the extreme acid resistance (XAR) response. The chain is H(+)/Cl(-) exchange transporter ClcA from Salmonella newport (strain SL254).